Consider the following 128-residue polypeptide: Leucine-rich single-pass membrane protein 1 (128 aa).

Ser-24 bears the Phosphoserine mark. The chain crosses the membrane as a helical span at residues 66 to 86 (GLLLVLTVSLALVFFAIFLII). Positions 90-111 (NQMEDVSRRLTAEGKDIDDLKK) form a coiled coil.

Its subcellular location is the membrane. This Mus musculus (Mouse) protein is Leucine-rich single-pass membrane protein 1 (Lsmem1).